A 703-amino-acid polypeptide reads, in one-letter code: Metastasis-associated protein MTA1 (703 aa).

The region spanning 1–164 is the BAH domain; it reads MAANMYRVGD…PQQKTLLADK (164 aa). The ELM2 domain maps to 165–276; it reads GEIRVGNRYQ…KAISALVPQG (112 aa). A Glycyl lysine isopeptide (Lys-Gly) (interchain with G-Cter in ubiquitin) cross-link involves residue Lys182. An SANT domain is found at 283–335; sequence DEMEEWSASEANLFEEALEKYGKDFTDIQQDFLPWKSLTSIIEYYYMWKTTDR. Ser386 bears the Phosphoserine mark. The GATA-type; atypical zinc finger occupies 393–420; the sequence is CESCYTTQSYQWYSWGPPNMQCRLCASC. Residues 437 to 460 are disordered; sequence DGERPGPNRNNMSPHGIPARSSGS. Ser449 bears the Phosphoserine mark. Lys509 participates in a covalent cross-link: Glycyl lysine isopeptide (Lys-Gly) (interchain with G-Cter in SUMO2 and SUMO3). Ser522 carries the post-translational modification Phosphoserine. Positions 542–552 are enriched in basic and acidic residues; the sequence is ETHPRPPKPDP. The segment at 542 to 583 is disordered; that stretch reads ETHPRPPKPDPVKSSSSVLSSLTPAKSAPVINNGSPTILGKR. The short motif at 545 to 552 is the SH3-binding element; that stretch reads PRPPKPDP. A Glycyl lysine isopeptide (Lys-Gly) (interchain with G-Cter in SUMO2) cross-link involves residue Lys549. The span at 553–565 shows a compositional bias: low complexity; sequence VKSSSSVLSSLTP. Thr564 is subject to Phosphothreonine. Position 576 is a phosphoserine (Ser576). A Phosphothreonine modification is found at Thr578. Lys614 is modified (N6-acetyllysine; alternate). A Glycyl lysine isopeptide (Lys-Gly) (interchain with G-Cter in ubiquitin); alternate cross-link involves residue Lys614. Ser627 is modified (phosphoserine). The interval 644 to 674 is interaction with RBBP4; it reads DVFYMATEETRKIRKLLSSSETKRAARRPYK. Residues 661–703 form a disordered region; the sequence is SSSETKRAARRPYKPIALRQSQALPLRPPPPAPVNDEPIVIED. Positions 684–693 match the SH3-binding motif; it reads LPLRPPPPAP. An SUMO interaction motif 1 (SIM); crucial for efficient sumoylation motif is present at residues 699-703; that stretch reads IVIED.

It belongs to the metastasis-associated protein family. As to quaternary structure, component of the nucleosome remodeling and deacetylase (NuRD) repressor complex, composed of core proteins MTA1, MTA2, MTA3, RBBP4, RBBP7, HDAC1, HDAC2, MBD2, MBD3, and peripherally associated proteins CDK2AP1, CDK2AP2, GATAD2A, GATAD2B, CHD3, CHD4 and CHD5. The exact stoichiometry of the NuRD complex is unknown, and some subunits such as MBD2 and MBD3, GATAD2A and GATAD2B, and CHD3, CHD4 and CHD5 define mutually exclusive NuRD complexes. Interacts with RBBP4; the interaction is direct. Interacts with BMAL1. Interacts with CLOCK. Interacts with COP1. Interacts with CSNK1G2 in the cytoplasm. Interacts with EP300. Interacts with HDAC2. Interacts with ITGB3BP/CENPR. Interacts with MBD3L2. Interacts with MDM2. Interacts with NACC2. Interacts with p53/TP53. Interacts with PIAS1. Interacts with PIAS3. Interacts with PIAS4. Interacts with PWWP2A. Interacts with PWWP2B. Interacts with SENP1. Interacts with SENP2. Interacts with SIX3; facilitates the binding of SIX3 to the core DNA motif of SIX3 promoter. Interacts with SUMO1. Interacts with SUMO2. Interacts with TFCP2L1; which is indispensable for TFCP2L1-mediated self-renewal-promoting effect and endoderm-inhibiting action. Interacts with TFAP2C. Interacts with TPR. Interacts with UBE2I/UBC9. Post-translationally, phosphorylation by CSNK1G2/CK1 triggered by estrogen enhances corepression of estrogen receptor (ER). Acetylation is essential for its transcriptional coactivator activity. In terms of processing, sumoylation positively regulates its transcriptional corepressor activity but does not affect the protein stability. Sumoylated preferentially by SUMO2 or SUMO3 than SUMO1. Sumoylation is enhanced by PIAS1/3/4 and preferentially sumoylated by SUMO2 in the presence of PIAS1/3/4. Desumoylated by SENP1. Post-translationally, ubiquitinated by COP1, which leads to proteasomal degradation. In terms of tissue distribution, isoform 1 abundant in testis and expressed at low levels in brain, heart, lung, liver, and kidney. Isoform 2 abundant in adrenal gland, brain, colon, heart, liver, lung, muscle, prostate, stomach, testis, and thymus and expressed at low levels in duodenum, kidney, pancreas, parotid, and spleen.

It is found in the nucleus. It localises to the nucleus envelope. The protein resides in the cytoplasm. The protein localises to the cytoskeleton. Its subcellular location is the rough endoplasmic reticulum. It is found in the golgi apparatus. It localises to the zymogen granule. Transcriptional coregulator which can act as both a transcriptional corepressor and coactivator. Acts as a component of the histone deacetylase NuRD complex which participates in the remodeling of chromatin. In the NuRD complex, regulates transcription of its targets by modifying the acetylation status of the target chromatin and cofactor accessibility to the target DNA. In conjunction with other components of NuRD, acts as a transcriptional corepressor of BRCA1, ESR1, TFF1 and CDKN1A. Acts as a transcriptional coactivator of BCAS3, and SUMO2, independent of the NuRD complex. Stimulates the expression of WNT1 by inhibiting the expression of its transcriptional corepressor SIX3. Regulates p53-dependent and -independent DNA repair processes following genotoxic stress. Regulates the stability and function of p53/TP53 by inhibiting its ubiquitination by COP1 and MDM2 thereby regulating the p53-dependent DNA repair. Plays a role in the regulation of the circadian clock and is essential for the generation and maintenance of circadian rhythms under constant light and for normal entrainment of behavior to light-dark (LD) cycles. Positively regulates the CLOCK-BMAL1 heterodimer mediated transcriptional activation of its own transcription and the transcription of CRY1. Regulates deacetylation of BMAL1 by regulating SIRT1 expression, resulting in derepressing CRY1-mediated transcription repression. With TFCP2L1, promotes establishment and maintenance of pluripotency in embryonic stem cells (ESCs) and inhibits endoderm differentiation. The chain is Metastasis-associated protein MTA1 (Mta1) from Rattus norvegicus (Rat).